A 605-amino-acid chain; its full sequence is Elongation factor 4 (605 aa).

The tr-type G domain occupies 8 to 190 (RRVRNFCIVA…AIITRIPPPQ (183 aa)). GTP contacts are provided by residues 20-25 (DHGKST) and 137-140 (NKID).

Belongs to the TRAFAC class translation factor GTPase superfamily. Classic translation factor GTPase family. LepA subfamily.

The protein localises to the cell inner membrane. The enzyme catalyses GTP + H2O = GDP + phosphate + H(+). Required for accurate and efficient protein synthesis under certain stress conditions. May act as a fidelity factor of the translation reaction, by catalyzing a one-codon backward translocation of tRNAs on improperly translocated ribosomes. Back-translocation proceeds from a post-translocation (POST) complex to a pre-translocation (PRE) complex, thus giving elongation factor G a second chance to translocate the tRNAs correctly. Binds to ribosomes in a GTP-dependent manner. This chain is Elongation factor 4, found in Treponema pallidum (strain Nichols).